A 284-amino-acid chain; its full sequence is D-tagatose-1,6-bisphosphate aldolase subunit GatY (284 aa).

The Proton donor role is filled by D82. Zn(2+) is bound by residues H83 and H180. A dihydroxyacetone phosphate-binding site is contributed by G181. H208 contributes to the Zn(2+) binding site. Dihydroxyacetone phosphate is bound by residues 209–211 (GAS) and 230–233 (NVAT).

It belongs to the class II fructose-bisphosphate aldolase family. TagBP aldolase GatY subfamily. Forms a complex with GatZ. Requires Zn(2+) as cofactor.

The catalysed reaction is D-tagatofuranose 1,6-bisphosphate = D-glyceraldehyde 3-phosphate + dihydroxyacetone phosphate. It functions in the pathway carbohydrate metabolism; D-tagatose 6-phosphate degradation; D-glyceraldehyde 3-phosphate and glycerone phosphate from D-tagatose 6-phosphate: step 2/2. Its function is as follows. Catalytic subunit of the tagatose-1,6-bisphosphate aldolase GatYZ, which catalyzes the reversible aldol condensation of dihydroxyacetone phosphate (DHAP or glycerone-phosphate) with glyceraldehyde 3-phosphate (G3P) to produce tagatose 1,6-bisphosphate (TBP). Requires GatZ subunit for full activity and stability. Is involved in the catabolism of galactitol. This is D-tagatose-1,6-bisphosphate aldolase subunit GatY from Escherichia coli O17:K52:H18 (strain UMN026 / ExPEC).